The chain runs to 1400 residues: DNA-directed RNA polymerase subunit beta' (1400 aa).

4 residues coordinate Zn(2+): Cys70, Cys72, Cys85, and Cys88. Asp460, Asp462, and Asp464 together coordinate Mg(2+). Cys814, Cys888, Cys895, and Cys898 together coordinate Zn(2+). Residues Arg1368–Glu1400 are disordered.

The protein belongs to the RNA polymerase beta' chain family. As to quaternary structure, the RNAP catalytic core consists of 2 alpha, 1 beta, 1 beta' and 1 omega subunit. When a sigma factor is associated with the core the holoenzyme is formed, which can initiate transcription. The cofactor is Mg(2+). Zn(2+) is required as a cofactor.

It catalyses the reaction RNA(n) + a ribonucleoside 5'-triphosphate = RNA(n+1) + diphosphate. Functionally, DNA-dependent RNA polymerase catalyzes the transcription of DNA into RNA using the four ribonucleoside triphosphates as substrates. In Vibrio parahaemolyticus serotype O3:K6 (strain RIMD 2210633), this protein is DNA-directed RNA polymerase subunit beta'.